We begin with the raw amino-acid sequence, 439 residues long: Mitochondrial distribution and morphology protein 10 (439 aa).

Residues 275 to 305 are disordered; that stretch reads LPDATPPSFQVPSSSSSSSNPVSPSTSQPPT. Residues 280-305 are compositionally biased toward low complexity; it reads PPSFQVPSSSSSSSNPVSPSTSQPPT.

It belongs to the MDM10 family. As to quaternary structure, component of the ER-mitochondria encounter structure (ERMES) or MDM complex, composed of MMM1, MDM10, MDM12 and MDM34. Associates with the mitochondrial outer membrane sorting assembly machinery SAM(core) complex.

Its subcellular location is the mitochondrion outer membrane. In terms of biological role, component of the ERMES/MDM complex, which serves as a molecular tether to connect the endoplasmic reticulum and mitochondria. Components of this complex are involved in the control of mitochondrial shape and protein biogenesis and may function in phospholipid exchange. MDM10 is involved in the late assembly steps of the general translocase of the mitochondrial outer membrane (TOM complex). Functions in the TOM40-specific route of the assembly of outer membrane beta-barrel proteins, including the association of TOM40 with the receptor TOM22 and small TOM proteins. Can associate with the SAM(core) complex as well as the MDM12-MMM1 complex, both involved in late steps of the major beta-barrel assembly pathway, that is responsible for biogenesis of all outer membrane beta-barrel proteins. May act as a switch that shuttles between both complexes and channels precursor proteins into the TOM40-specific pathway. Plays a role in mitochondrial morphology and in the inheritance of mitochondria. The protein is Mitochondrial distribution and morphology protein 10 of Laccaria bicolor (strain S238N-H82 / ATCC MYA-4686) (Bicoloured deceiver).